Consider the following 65-residue polypeptide: DNA-directed RNA polymerase subunit Rpo10 (65 aa).

The Zn(2+) site is built by cysteine 7, cysteine 10, cysteine 44, and cysteine 45.

Belongs to the archaeal Rpo10/eukaryotic RPB10 RNA polymerase subunit family. Part of the RNA polymerase complex. Zn(2+) serves as cofactor.

The protein resides in the cytoplasm. It carries out the reaction RNA(n) + a ribonucleoside 5'-triphosphate = RNA(n+1) + diphosphate. Its function is as follows. DNA-dependent RNA polymerase (RNAP) catalyzes the transcription of DNA into RNA using the four ribonucleoside triphosphates as substrates. The chain is DNA-directed RNA polymerase subunit Rpo10 from Thermococcus onnurineus (strain NA1).